Here is a 223-residue protein sequence, read N- to C-terminus: MSLYATQDEKKQAAAKAALKHLPKGGILGVGTGSTVNFLIDLLPELQLEAAVASSQATADRLKKLGIEVVDMNHVGSLDAYVDGADEIDRHMHMIKGGGAALTREKIVASIAKKFVCIVDDSKWVDQLGRDFPLPVEVIPMARSAVARKLVSLGGDPVYREGVVTDNGNVILDVFNLNILNAIDLEKTINNIPGVVTNGIFALNPATIAIVATNDGIEERTAQ.

Substrate is bound by residues 32-35 (TGST), 83-86 (DGAD), and 96-99 (KGGG). Glu-105 acts as the Proton acceptor in catalysis. Lys-123 provides a ligand contact to substrate.

This sequence belongs to the ribose 5-phosphate isomerase family. Homodimer.

It carries out the reaction aldehydo-D-ribose 5-phosphate = D-ribulose 5-phosphate. It participates in carbohydrate degradation; pentose phosphate pathway; D-ribose 5-phosphate from D-ribulose 5-phosphate (non-oxidative stage): step 1/1. Catalyzes the reversible conversion of ribose-5-phosphate to ribulose 5-phosphate. The protein is Ribose-5-phosphate isomerase A of Acinetobacter baumannii (strain AYE).